The following is a 105-amino-acid chain: uncharacterized protein (105 aa).

This is an uncharacterized protein from Rickettsia conorii (strain ATCC VR-613 / Malish 7).